A 563-amino-acid chain; its full sequence is Alpha-keto-acid decarboxylase (563 aa).

A thiamine diphosphate-binding site is contributed by glutamate 59. The disordered stretch occupies residues 347–367 (SSPPVASPPAEPLPPPPPREQ). Over residues 351 to 366 (VASPPAEPLPPPPPRE) the composition is skewed to pro residues. Residues 394 to 476 (TSFYGMADHR…VVVNNDGYTV (83 aa)) form a thiamine pyrophosphate binding region. 3 residues coordinate Mg(2+): aspartate 444, asparagine 471, and glycine 473.

This sequence belongs to the TPP enzyme family. A metal cation serves as cofactor. It depends on thiamine diphosphate as a cofactor.

Functionally, decarboxylates branched-chain and aromatic alpha-keto acids to aldehydes. This chain is Alpha-keto-acid decarboxylase (kdc), found in Mycolicibacterium paratuberculosis (strain ATCC BAA-968 / K-10) (Mycobacterium paratuberculosis).